A 1248-amino-acid chain; its full sequence is Bifunctional autolysin (1248 aa).

An N-terminal signal peptide occupies residues 1 to 29 (MAKKFNYKLPSMVALTLVGSAVTAHQVQA). A disordered region spans residues 103-134 (GDTRANQSATTNNTQPVAKSTSTTAPKTNTNV). The segment at 191–767 (ASAQPRSVAA…AVAQPKTAVK (577 aa)) is N-acetylmuramoyl-L-alanine amidase. GW domains are found at residues 435-509 (TVAA…YNTA), 511-585 (SPVN…DTAK), 604-678 (TVSS…YNNA), 680-754 (SPVN…VPAA), 776-851 (TTQT…VQNL), 853-928 (KEVK…APTA), and 935-1009 (AAKD…KELI). The interval 768–1248 (AYTVTKPQTT…GKYFDIPQYK (481 aa)) is endo-beta-N-acetylglucosaminidase.

The protein in the N-terminal section; belongs to the N-acetylmuramoyl-L-alanine amidase 2 family. This sequence in the C-terminal section; belongs to the glycosyl hydrolase 73 family. Oligomer; forms a ring structure at the cell surface which is important for efficient partitioning of daughter cells after cell division. Post-translationally, undergoes proteolytic processing to generate the two extracellular lytic enzymes, probably at the septal region on the cell surface.

It is found in the secreted. It carries out the reaction Hydrolyzes the link between N-acetylmuramoyl residues and L-amino acid residues in certain cell-wall glycopeptides.. The enzyme catalyses an N(4)-(oligosaccharide-(1-&gt;3)-[oligosaccharide-(1-&gt;6)]-beta-D-Man-(1-&gt;4)-beta-D-GlcNAc-(1-&gt;4)-alpha-D-GlcNAc)-L-asparaginyl-[protein] + H2O = an oligosaccharide-(1-&gt;3)-[oligosaccharide-(1-&gt;6)]-beta-D-Man-(1-&gt;4)-D-GlcNAc + N(4)-(N-acetyl-beta-D-glucosaminyl)-L-asparaginyl-[protein]. In terms of biological role, endohydrolysis of the di-N-acetylchitobiosyl unit in high-mannose glycopeptides and glycoproteins containing the -[(Man)5(GlcNAc)2]-Asn structure. One N-acetyl-D-glucosamine residue remains attached to the protein; the rest of the oligosaccharide is released intact. Cleaves the peptidoglycan connecting the daughter cells at the end of the cell division cycle, resulting in the separation of the two newly divided cells. Acts as an autolysin in penicillin-induced lysis. The protein is Bifunctional autolysin (atl) of Staphylococcus aureus (strain Mu50 / ATCC 700699).